We begin with the raw amino-acid sequence, 151 residues long: Large ribosomal subunit protein bL9 (151 aa).

Belongs to the bacterial ribosomal protein bL9 family.

Binds to the 23S rRNA. The polypeptide is Large ribosomal subunit protein bL9 (Mycolicibacterium gilvum (strain PYR-GCK) (Mycobacterium gilvum (strain PYR-GCK))).